We begin with the raw amino-acid sequence, 968 residues long: Phosphoenolpyruvate carboxylase (968 aa).

Phosphoserine is present on S11. Catalysis depends on residues H172 and K602.

This sequence belongs to the PEPCase type 1 family. In terms of assembly, homotetramer. Mg(2+) serves as cofactor.

The protein localises to the cytoplasm. The catalysed reaction is oxaloacetate + phosphate = phosphoenolpyruvate + hydrogencarbonate. Its activity is regulated as follows. By light-reversible phosphorylation. In terms of biological role, through the carboxylation of phosphoenolpyruvate (PEP) it forms oxaloacetate, a four-carbon dicarboxylic acid source for the tricarboxylic acid cycle. The polypeptide is Phosphoenolpyruvate carboxylase (Phaseolus vulgaris (Kidney bean)).